A 141-amino-acid polypeptide reads, in one-letter code: 4-hydroxybenzoyl-CoA thioesterase (141 aa).

The active site involves aspartate 17. Residues tryptophan 47, 59-61, and lysine 90 each bind substrate; that span reads TPI.

This sequence belongs to the 4-hydroxybenzoyl-CoA thioesterase family. In terms of assembly, homotetramer.

It carries out the reaction 4-hydroxybenzoyl-CoA + H2O = 4-hydroxybenzoate + CoA + H(+). It participates in xenobiotic degradation; 4-chlorobenzoate degradation; 4-hydroxybenzoate from 4-chlorobenzoate: step 3/3. Unaffected by EDTA, Mg(2+), Mn(2+), Fe(2+), Ca(2+), Co(2+) and Zn(2+). Functionally, hydrolyzes 4-hydroxybenzoate-CoA, and to a lesser extent benzoyl-CoA and 4-chlorobenzoate-CoA. Not active against aliphatic acyl-CoA thioesters, including palmitoyl-CoA, hexanoyl-CoA and acetyl-CoA. This chain is 4-hydroxybenzoyl-CoA thioesterase, found in Pseudomonas sp. (strain CBS-3).